The chain runs to 465 residues: Cyclin-A1 (465 aa).

Belongs to the cyclin family. Cyclin AB subfamily. As to quaternary structure, interacts with the CDK2 and the CDC2 protein kinases to form a serine/threonine kinase holoenzyme complex. The cyclin subunit imparts substrate specificity to the complex. Does not bind CDK4 and CDK5 (in vitro). The cyclin A1-CDK2 complex interacts with transcription factor E2F-1 and RB proteins. Found in a complex with CDK2, CABLES1 and CCNE1. Interacts with INCA1. Interacts with KLHDC9. Post-translationally, polyubiquitinated via 'Lys-11'-linked ubiquitin by the anaphase-promoting complex (APC/C), leading to its degradation by the proteasome. Deubiquitinated and stabilized by USP37 enables entry into S phase. Ubiquitinated during the G1 phase by the SCF(FBXO31) complex, leading to its proteasomal degradation. In terms of tissue distribution, very high levels in testis and very low levels in brain. Also found in myeloid leukemia cell lines.

It is found in the nucleus. May be involved in the control of the cell cycle at the G1/S (start) and G2/M (mitosis) transitions. May primarily function in the control of the germline meiotic cell cycle and additionally in the control of mitotic cell cycle in some somatic cells. This Homo sapiens (Human) protein is Cyclin-A1 (CCNA1).